A 1091-amino-acid polypeptide reads, in one-letter code: ATP-dependent helicase/deoxyribonuclease subunit B (1091 aa).

It belongs to the helicase family. AddB/RexB type 2 subfamily. As to quaternary structure, heterodimer of AddA and RexB. It depends on Mg(2+) as a cofactor.

In terms of biological role, the heterodimer acts as both an ATP-dependent DNA helicase and an ATP-dependent, dual-direction single-stranded exonuclease. Recognizes the chi site generating a DNA molecule suitable for the initiation of homologous recombination. This subunit has 5' -&gt; 3' nuclease activity but not helicase activity. The chain is ATP-dependent helicase/deoxyribonuclease subunit B from Streptococcus pneumoniae (strain ATCC 700669 / Spain 23F-1).